We begin with the raw amino-acid sequence, 785 residues long: uncharacterized protein (785 aa).

Residues 53 to 65 show a composition bias toward polar residues; that stretch reads KNTLTGSHGSNDL. Residues 53 to 162 form a disordered region; the sequence is KNTLTGSHGS…RKAADEQGPI (110 aa). Acidic residues predominate over residues 66–79; that stretch reads ATDESLDSPEDEEA. Residues 81 to 94 are compositionally biased toward polar residues; it reads SPLQLGTPTSTTSG. A Phosphoserine modification is found at Ser-215. Disordered stretches follow at residues 571–590 and 631–657; these read KVVD…TSVN and DSSG…RIQF. The span at 575-584 shows a compositional bias: acidic residues; that stretch reads SDDEESDSDE. Ser-667 carries the phosphoserine modification. The tract at residues 693 to 785 is disordered; that stretch reads DPKMKFTSHP…FGSIFKKVFG (93 aa). The segment covering 725 to 739 has biased composition (basic residues); that stretch reads RKAHHHHHHHNHVSR. Low complexity predominate over residues 776–785; sequence FGSIFKKVFG.

This is an uncharacterized protein from Saccharomyces cerevisiae (strain ATCC 204508 / S288c) (Baker's yeast).